We begin with the raw amino-acid sequence, 221 residues long: Guanylate kinase (221 aa).

The region spanning 20–198 (GSLFMVVAPS…ALAELRTVVQ (179 aa)) is the Guanylate kinase-like domain. Residue 27-34 (APSGAGKS) participates in ATP binding.

The protein belongs to the guanylate kinase family.

The protein resides in the cytoplasm. The enzyme catalyses GMP + ATP = GDP + ADP. In terms of biological role, essential for recycling GMP and indirectly, cGMP. The chain is Guanylate kinase from Ralstonia nicotianae (strain ATCC BAA-1114 / GMI1000) (Ralstonia solanacearum).